Here is a 130-residue protein sequence, read N- to C-terminus: Small ribosomal subunit protein uS9 (130 aa).

It belongs to the universal ribosomal protein uS9 family.

The protein is Small ribosomal subunit protein uS9 of Streptococcus agalactiae serotype Ia (strain ATCC 27591 / A909 / CDC SS700).